We begin with the raw amino-acid sequence, 830 residues long: Protein translocase subunit SecA (830 aa).

ATP-binding positions include glutamine 86, 104–108, and aspartate 491; that span reads GEGKT. Zn(2+) contacts are provided by cysteine 813, cysteine 815, cysteine 824, and cysteine 825.

Belongs to the SecA family. Monomer and homodimer. Part of the essential Sec protein translocation apparatus which comprises SecA, SecYEG and auxiliary proteins SecDF. Other proteins may also be involved. Zn(2+) is required as a cofactor.

Its subcellular location is the cell membrane. The protein resides in the cytoplasm. The catalysed reaction is ATP + H2O + cellular proteinSide 1 = ADP + phosphate + cellular proteinSide 2.. Functionally, part of the Sec protein translocase complex. Interacts with the SecYEG preprotein conducting channel. Has a central role in coupling the hydrolysis of ATP to the transfer of proteins into and across the cell membrane, serving as an ATP-driven molecular motor driving the stepwise translocation of polypeptide chains across the membrane. The sequence is that of Protein translocase subunit SecA from Syntrophomonas wolfei subsp. wolfei (strain DSM 2245B / Goettingen).